A 563-amino-acid polypeptide reads, in one-letter code: Arginine--tRNA ligase (563 aa).

Residues 121–131 (PNIAKPFSIGH) carry the 'HIGH' region motif.

Belongs to the class-I aminoacyl-tRNA synthetase family. In terms of assembly, monomer.

Its subcellular location is the cytoplasm. The catalysed reaction is tRNA(Arg) + L-arginine + ATP = L-arginyl-tRNA(Arg) + AMP + diphosphate. This chain is Arginine--tRNA ligase, found in Streptococcus pyogenes serotype M4 (strain MGAS10750).